The sequence spans 262 residues: Acyl-[acyl-carrier-protein]--UDP-N-acetylglucosamine O-acyltransferase (262 aa).

It belongs to the transferase hexapeptide repeat family. LpxA subfamily. In terms of assembly, homotrimer.

It is found in the cytoplasm. It catalyses the reaction a (3R)-hydroxyacyl-[ACP] + UDP-N-acetyl-alpha-D-glucosamine = a UDP-3-O-[(3R)-3-hydroxyacyl]-N-acetyl-alpha-D-glucosamine + holo-[ACP]. Its pathway is glycolipid biosynthesis; lipid IV(A) biosynthesis; lipid IV(A) from (3R)-3-hydroxytetradecanoyl-[acyl-carrier-protein] and UDP-N-acetyl-alpha-D-glucosamine: step 1/6. Its function is as follows. Involved in the biosynthesis of lipid A, a phosphorylated glycolipid that anchors the lipopolysaccharide to the outer membrane of the cell. In Herminiimonas arsenicoxydans, this protein is Acyl-[acyl-carrier-protein]--UDP-N-acetylglucosamine O-acyltransferase.